The sequence spans 144 residues: Large ribosomal subunit protein uL15 (144 aa).

Residues Met-1–His-13 are compositionally biased toward basic residues. The tract at residues Met-1–Asn-32 is disordered.

The protein belongs to the universal ribosomal protein uL15 family. Part of the 50S ribosomal subunit.

Functionally, binds to the 23S rRNA. The protein is Large ribosomal subunit protein uL15 of Thermoplasma acidophilum (strain ATCC 25905 / DSM 1728 / JCM 9062 / NBRC 15155 / AMRC-C165).